Reading from the N-terminus, the 267-residue chain is MSLPLNNFKRALAEGKPQFGLWAALADAYVTELLATAGFDWLLIDNEHAPNDVRSTLAQLQAVAAYASHPVVRPVRSDSALIKQLLDIGAQTLLLPMIDTAEQAADAVAATRYPPQGIRGVGSALARASRWNRIPDYLNTAADELCVLVQVESVQGMENLSAIAAVDGVDGVFFGPSDLSASMGLLGKPGDASVREAIRNGIQTVLRAGKAAGVLAPDPAIAADYLEAGATFVAVGTDTGLLSRAAADLAASYKKTATMAASPKGGY.

The active-site Proton acceptor is histidine 48. Positions 152 and 178 each coordinate a divalent metal cation.

Belongs to the HpcH/HpaI aldolase family. The cofactor is a divalent metal cation.

The enzyme catalyses D-glyceraldehyde + 3-hydroxypyruvate = 2-dehydro-D-galactonate. The catalysed reaction is D-glyceraldehyde + 3-hydroxypyruvate = (3R,4S,5R)-3,4,5,6-tetrahydroxy-2-oxohexanoate. It catalyses the reaction D-glyceraldehyde + pyruvate = 2-dehydro-3-deoxy-L-galactonate. Its function is as follows. Aldolase which can catalyze in vitro the aldolisation reaction between hydroxypyruvate (HPA) or pyruvate (PA) and D-glyceraldehyde (D-GA). The condensation of hydroxypyruvate and D-glyceraldehyde produces 2-dehydro-D-galactonate as the major product and (3R,4S,5R)-3,4,5,6-tetrahydroxy-2-oxohexanoate. The condensation of pyruvate and D-glyceraldehyde produces 2-dehydro-3-deoxy-L-galactonate. This Paraburkholderia phytofirmans (strain DSM 17436 / LMG 22146 / PsJN) (Burkholderia phytofirmans) protein is Hydroxypyruvate/pyruvate aldolase Bphyt_5830.